The chain runs to 276 residues: Probable transposase for insertion sequence element IS702 (276 aa).

One can recognise a DDE Tnp4 domain in the interval 118–256; it reads MDVTESPIER…SNQYRNRHRR (139 aa). Residues D119, D170, D190, and E234 each contribute to the a divalent metal cation site.

It belongs to the transposase 11 family. Requires a divalent metal cation as cofactor.

Involved in the transposition of the insertion sequence. In Microchaete diplosiphon (Fremyella diplosiphon), this protein is Probable transposase for insertion sequence element IS702.